A 292-amino-acid chain; its full sequence is Diaminopimelate epimerase (292 aa).

Substrate-binding residues include Asn13, Gln46, and Asn66. Cys75 serves as the catalytic Proton donor. Residues 76–77 (GN), Asn170, Asn203, and 221–222 (ER) contribute to the substrate site. Cys230 acts as the Proton acceptor in catalysis. A substrate-binding site is contributed by 231–232 (GT).

Belongs to the diaminopimelate epimerase family. Homodimer.

It localises to the cytoplasm. It carries out the reaction (2S,6S)-2,6-diaminopimelate = meso-2,6-diaminopimelate. It participates in amino-acid biosynthesis; L-lysine biosynthesis via DAP pathway; DL-2,6-diaminopimelate from LL-2,6-diaminopimelate: step 1/1. In terms of biological role, catalyzes the stereoinversion of LL-2,6-diaminopimelate (L,L-DAP) to meso-diaminopimelate (meso-DAP), a precursor of L-lysine and an essential component of the bacterial peptidoglycan. The chain is Diaminopimelate epimerase from Acidovorax ebreus (strain TPSY) (Diaphorobacter sp. (strain TPSY)).